The sequence spans 181 residues: ATP-dependent protease subunit HslV (181 aa).

Threonine 9 is an active-site residue. Serine 166, cysteine 169, and threonine 172 together coordinate Na(+).

This sequence belongs to the peptidase T1B family. HslV subfamily. In terms of assembly, a double ring-shaped homohexamer of HslV is capped on each side by a ring-shaped HslU homohexamer. The assembly of the HslU/HslV complex is dependent on binding of ATP.

It localises to the cytoplasm. The enzyme catalyses ATP-dependent cleavage of peptide bonds with broad specificity.. With respect to regulation, allosterically activated by HslU binding. Functionally, protease subunit of a proteasome-like degradation complex believed to be a general protein degrading machinery. In Staphylococcus haemolyticus (strain JCSC1435), this protein is ATP-dependent protease subunit HslV.